We begin with the raw amino-acid sequence, 249 residues long: AA9 family lytic polysaccharide monooxygenase A (249 aa).

The signal sequence occupies residues 1-19 (MRGPLCFTLIAIAVTSVVA). Cu(2+) contacts are provided by His-20 and His-97. Cysteines 60 and 183 form a disulfide. Residue His-163 coordinates O2. Tyr-180 contributes to the Cu(2+) binding site.

Belongs to the polysaccharide monooxygenase AA9 family. Cu(2+) serves as cofactor.

Its subcellular location is the secreted. The enzyme catalyses [(1-&gt;4)-beta-D-glucosyl]n+m + reduced acceptor + O2 = 4-dehydro-beta-D-glucosyl-[(1-&gt;4)-beta-D-glucosyl]n-1 + [(1-&gt;4)-beta-D-glucosyl]m + acceptor + H2O.. Lytic polysaccharide monooxygenase (LPMO) that depolymerizes crystalline and amorphous polysaccharides via the oxidation of scissile alpha- or beta-(1-4)-glycosidic bonds, yielding C4 oxidation products. Catalysis by LPMOs requires the reduction of the active-site copper from Cu(II) to Cu(I) by a reducing agent and H(2)O(2) or O(2) as a cosubstrate. Active on cellulose and cello-oligosaccharides, as well as plant cell wall-derived hemicellulosic polysaccharides. Also active on cello-oligosaccharides such as cellohexaose, cellopentaose or cellotetraose. The protein is AA9 family lytic polysaccharide monooxygenase A of Armillaria gallica (Bulbous honey fungus).